Here is a 278-residue protein sequence, read N- to C-terminus: MANYTAADVKKLRELTGAGMMDCKKALDEAEGNVEKAVEALRIKGQKGVAKREGRSAENGAVVSIIADDNSSGVLVELKCETDFVAKGEKFQNVATAIAEHVAKAAPADLDALLASEIEAGKTVQAFVDEANANLGEKIVLDRFAQFADGYVLAYMHRTMPDLPPQIGVLVELDKPNAEVAKGVAQHIAAFAPKYLSKEDVRPDVVESERRIAEETTRAEGKPEAAIAKIVEGRVNGFFKDATLLGQPYALDNKKSVQKVLDEAGVTLKRFTRIKVGI.

Residues 82–85 form an involved in Mg(2+) ion dislocation from EF-Tu region; it reads TDFV.

The protein belongs to the EF-Ts family.

The protein resides in the cytoplasm. In terms of biological role, associates with the EF-Tu.GDP complex and induces the exchange of GDP to GTP. It remains bound to the aminoacyl-tRNA.EF-Tu.GTP complex up to the GTP hydrolysis stage on the ribosome. This Streptomyces ramocissimus protein is Elongation factor Ts (tsf).